A 266-amino-acid chain; its full sequence is MRLIPLKNTTEVGKWAARYIVNRINAFKPTADRPFVLGLPTGGTPMEAYKHLVALYKAGEVSFKNVVTFNMDEYVGLPQEHPESYYTFMHSNFFDHVDIPAENINLLNGNAPDIDEECRRYEEKIKSYGKIHLFMGGVGVDGHIAFNEPASSLASRTRIKTLTEETREANSRFFGGDANLVPKYALTVGVGTLLDAEEVMILVTGRGKAQALQAAVEGSINHMWTISCLQLHAKAIMVCDEPSTMELKVKTVKYFSELEAENIKNL.

Asp-72 functions as the Proton acceptor; for enolization step in the catalytic mechanism. Asp-141 acts as the For ring-opening step in catalysis. The active-site Proton acceptor; for ring-opening step is His-143. Glu-148 acts as the For ring-opening step in catalysis.

It belongs to the glucosamine/galactosamine-6-phosphate isomerase family. NagB subfamily. Homohexamer.

The catalysed reaction is alpha-D-glucosamine 6-phosphate + H2O = beta-D-fructose 6-phosphate + NH4(+). It participates in amino-sugar metabolism; N-acetylneuraminate degradation; D-fructose 6-phosphate from N-acetylneuraminate: step 5/5. With respect to regulation, allosterically activated by N-acetylglucosamine 6-phosphate (GlcNAc6P). Catalyzes the reversible isomerization-deamination of glucosamine 6-phosphate (GlcN6P) to form fructose 6-phosphate (Fru6P) and ammonium ion. This chain is Glucosamine-6-phosphate deaminase, found in Yersinia enterocolitica serotype O:8 / biotype 1B (strain NCTC 13174 / 8081).